The chain runs to 311 residues: Aspartate carbamoyltransferase catalytic subunit (311 aa).

Carbamoyl phosphate contacts are provided by R59 and T60. K87 lines the L-aspartate pocket. Positions 109, 139, and 142 each coordinate carbamoyl phosphate. Positions 172 and 224 each coordinate L-aspartate. The carbamoyl phosphate site is built by A265 and P266.

The protein belongs to the aspartate/ornithine carbamoyltransferase superfamily. ATCase family. As to quaternary structure, heterododecamer (2C3:3R2) of six catalytic PyrB chains organized as two trimers (C3), and six regulatory PyrI chains organized as three dimers (R2).

The catalysed reaction is carbamoyl phosphate + L-aspartate = N-carbamoyl-L-aspartate + phosphate + H(+). Its pathway is pyrimidine metabolism; UMP biosynthesis via de novo pathway; (S)-dihydroorotate from bicarbonate: step 2/3. Its function is as follows. Catalyzes the condensation of carbamoyl phosphate and aspartate to form carbamoyl aspartate and inorganic phosphate, the committed step in the de novo pyrimidine nucleotide biosynthesis pathway. This chain is Aspartate carbamoyltransferase catalytic subunit, found in Streptococcus pyogenes serotype M12 (strain MGAS2096).